The following is a 557-amino-acid chain: Probable asparagine synthetase [glutamine-hydrolyzing] (557 aa).

Cysteine 2 (for GATase activity) is an active-site residue. Positions 2-188 (CGILAVHHVA…PGHYYDSETK (187 aa)) constitute a Glutamine amidotransferase type-2 domain. L-glutamine is bound by residues 50–54 (RLAIV), 75–77 (NGE), and aspartate 99. The Asparagine synthetase domain maps to 196–531 (PSWWDENKIP…PRQCADTVMR (336 aa)). ATP is bound by residues leucine 235, isoleucine 280, and 354-355 (SG). Phosphoserine is present on residues serine 391 and serine 489.

The protein localises to the cytoplasm. The protein resides in the nucleus. The catalysed reaction is L-aspartate + L-glutamine + ATP + H2O = L-asparagine + L-glutamate + AMP + diphosphate + H(+). It functions in the pathway amino-acid biosynthesis; L-asparagine biosynthesis; L-asparagine from L-aspartate (L-Gln route): step 1/1. The polypeptide is Probable asparagine synthetase [glutamine-hydrolyzing] (asn1) (Schizosaccharomyces pombe (strain 972 / ATCC 24843) (Fission yeast)).